The following is a 1042-amino-acid chain: Serine/threonine-protein kinase LATS2 (1042 aa).

The tract at residues 23–44 is disordered; that stretch reads REGLKQPSKASTQGLLVGPNSD. A compositionally biased stretch (polar residues) spans 30–44; the sequence is SKASTQGLLVGPNSD. Phosphoserine; by AURKA is present on Ser82. The UBA domain maps to 97–138; that stretch reads EVNRQMLQELVNAGCDQEMAGRALKQTGSRSIEAALEYISKM. Positions 100-140 are interaction with ubiquitinated AMOTL2; sequence RQMLQELVNAGCDQEMAGRALKQTGSRSIEAALEYISKMGY. The segment at 237 to 282 is disordered; sequence HFPGTHYGRGHLLSEQPGYGVQRSSSFQNKTPPDAYSSMAKAQGGP. Positions 258–267 are enriched in polar residues; sequence QRSSSFQNKT. A Phosphothreonine modification is found at Thr267. Residue Ser362 is modified to Phosphoserine. Disordered stretches follow at residues 378–399, 442–481, and 501–550; these read RAGPSRTNSFNNPQPEPSLPAP, PATESLETKEGSAGPHPLDVDYGGSERRCPPPPYPKHLLL, and QSLR…KRES. The PPxY motif motif lies at 472 to 475; sequence PPPY. The span at 507–530 shows a compositional bias: basic and acidic residues; sequence TEQDRSDKSHKGAKGDKAGRDKKQ. The residue at position 534 (Ser534) is a Phosphoserine. Over residues 541-550 the composition is skewed to basic and acidic residues; that stretch reads NSRDEEKRES. The Protein kinase domain occupies 626–931; that stretch reads FVKIKTLGIG…ADDLKAHPFF (306 aa). Residues 632–640 and Lys655 contribute to the ATP site; that span reads LGIGAFGEV. Residue Asp749 is the Proton acceptor of the active site. The AGC-kinase C-terminal domain maps to 932 to 1010; sequence NTIDFSRDIR…RRFFDDNGYP (79 aa). The residue at position 999 (Thr999) is a Phosphothreonine. The tract at residues 1014–1042 is disordered; sequence PKPSEPAESADPGDADLEGAAEGCQPVYV.

This sequence belongs to the protein kinase superfamily. AGC Ser/Thr protein kinase family. Interacts with and is phosphorylated by AURKA. Binds to AR. Interacts with AJUBA during mitosis and this complex regulates organization of the spindle apparatus through recruitment of gamma-tubulin to the centrosome. Interacts (via PPxY motif) with YAP1 (via WW domains). Interacts with MOB1A and MOB1B. Interacts with LIMD1, WTIP and AJUBA. Interacts with SNAI1. Interacts with WWC1, WWC2 and WWC3 (via their WW domains). Interacts (via UBA domain) with ubiquitinated AMOTL2; the interaction promotes LATS2 phosphorylation of YAP1. It depends on Mg(2+) as a cofactor. Autophosphorylated and phosphorylated during M-phase and the G1/S-phase of the cell cycle. Phosphorylated and activated by STK3/MST2. Phosphorylated by MAP4Ks; in parallel to STK3/MST2 and resulting to its activation. Phosphorylation by NUAK2 may regulate its activity in phosphorylation and inactivation YAP1. Expressed at high levels in ovary and testis and at lower levels in all other tissues examined.

The protein resides in the cytoplasm. It localises to the cytoskeleton. Its subcellular location is the microtubule organizing center. It is found in the centrosome. The protein localises to the spindle pole. The protein resides in the nucleus. It carries out the reaction L-seryl-[protein] + ATP = O-phospho-L-seryl-[protein] + ADP + H(+). The enzyme catalyses L-threonyl-[protein] + ATP = O-phospho-L-threonyl-[protein] + ADP + H(+). Negative regulator of YAP1 in the Hippo signaling pathway that plays a pivotal role in organ size control and tumor suppression by restricting proliferation and promoting apoptosis. The core of this pathway is composed of a kinase cascade wherein STK3/MST2 and STK4/MST1, in complex with its regulatory protein SAV1, phosphorylates and activates LATS1/2 in complex with its regulatory protein MOB1, which in turn phosphorylates and inactivates YAP1 oncoprotein and WWTR1/TAZ. Phosphorylation of YAP1 by LATS2 inhibits its translocation into the nucleus to regulate cellular genes important for cell proliferation, cell death, and cell migration. Also phosphorylates YAP1 in response to cell contact inhibition-driven WWP1 ubiquitination of AMOTL2, which results in LATS2 activation. Acts as a tumor suppressor which plays a critical role in centrosome duplication, maintenance of mitotic fidelity and genomic stability. Negatively regulates G1/S transition by down-regulating cyclin E/CDK2 kinase activity. Negative regulator of the androgen receptor. Phosphorylates SNAI1 in the nucleus leading to its nuclear retention and stabilization, which enhances its epithelial-mesenchymal transition and tumor cell invasion/migration activities. This tumor-promoting activity is independent of its effects upon YAP1 or WWTR1/TAZ. Acts as an activator of the NLRP3 inflammasome by mediating phosphorylation of 'Ser-265' of NLRP3 following NLRP3 palmitoylation, promoting NLRP3 activation by NEK7. This Mus musculus (Mouse) protein is Serine/threonine-protein kinase LATS2.